The primary structure comprises 266 residues: MKLVIDAGNTNIVFAVHDGSRWRGTWRIATDAQRTSDEYGVWLTVLLDRAGIAAGGIDGAVIGTVVPAALYHLRRLCRDWFSLEPLIARAELDWGFAIEMDNPAEIGADRLLNALAAHHGYGGPLIVIDFGTATTFDVVNGNGAYVGGVIAPGINLSVEALHQAAARLPRIGIGRPQLVIGKSTIPAMRSGIYWGYVGLVEGLIARIEADFGAPMKTIATGGLAPLIAEGTSRIEHTDPDLTLEGLRLLALRNPAPVLRPREAEHE.

6-13 (DAGNTNIV) contributes to the ATP binding site. 107–110 (GADR) provides a ligand contact to substrate. Residue aspartate 109 is the Proton acceptor of the active site. Residue aspartate 129 coordinates K(+). Threonine 132 is a binding site for ATP. Residue threonine 184 participates in substrate binding.

The protein belongs to the type III pantothenate kinase family. As to quaternary structure, homodimer. The cofactor is NH4(+). Requires K(+) as cofactor.

Its subcellular location is the cytoplasm. It carries out the reaction (R)-pantothenate + ATP = (R)-4'-phosphopantothenate + ADP + H(+). The protein operates within cofactor biosynthesis; coenzyme A biosynthesis; CoA from (R)-pantothenate: step 1/5. Functionally, catalyzes the phosphorylation of pantothenate (Pan), the first step in CoA biosynthesis. This is Type III pantothenate kinase from Acidiphilium cryptum (strain JF-5).